A 424-amino-acid chain; its full sequence is Endoglucanase 1 (424 aa).

Positions 1-18 (MAKFSALCSLALLGLATA) are cleaved as a signal peptide. 9 cysteine pairs are disulfide-bonded: Cys35–Cys41, Cys68–Cys90, Cys80–Cys86, Cys156–Cys384, Cys188–Cys211, Cys192–Cys210, Cys231–Cys250, Cys239–Cys244, and Cys255–Cys331. The N-linked (GlcNAc...) asparagine glycan is linked to Asn76. The Nucleophile role is filled by Glu213. Glu218 (proton donor) is an active-site residue. 2 N-linked (GlcNAc...) asparagine glycosylation sites follow: Asn271 and Asn385.

It belongs to the glycosyl hydrolase 7 (cellulase C) family. In terms of assembly, monomer.

Its subcellular location is the secreted. It catalyses the reaction Endohydrolysis of (1-&gt;4)-beta-D-glucosidic linkages in cellulose, lichenin and cereal beta-D-glucans.. Functionally, endoglucanase that is involved in the biological conversion of cellulose to glucose. Hydrolyzes internal beta-1,4-glucosidic bonds. The protein is Endoglucanase 1 of Pyricularia oryzae (strain 70-15 / ATCC MYA-4617 / FGSC 8958) (Rice blast fungus).